The primary structure comprises 508 residues: NADH-quinone oxidoreductase subunit N 1 (508 aa).

The next 13 helical transmembrane spans lie at 2–22 (ILGP…GALL), 47–67 (ALGT…VGFV), 87–107 (FTLF…LLAG), 126–146 (FSTV…LFLG), 175–195 (FLLG…IYGA), 220–240 (ALLL…VSAV), 260–280 (FMAV…LLGA), 291–311 (AGWP…ANLI), 321–341 (MLAY…AATV), 351–371 (VMFY…TLIL), 396–416 (ALAF…AGFF), 431–453 (YTLS…RVLV), and 479–499 (LVVS…SLGI).

Belongs to the complex I subunit 2 family. NDH-1 is composed of 14 different subunits. Subunits NuoA, H, J, K, L, M, N constitute the membrane sector of the complex.

Its subcellular location is the cell inner membrane. The catalysed reaction is a quinone + NADH + 5 H(+)(in) = a quinol + NAD(+) + 4 H(+)(out). Its function is as follows. NDH-1 shuttles electrons from NADH, via FMN and iron-sulfur (Fe-S) centers, to quinones in the respiratory chain. The immediate electron acceptor for the enzyme in this species is believed to be ubiquinone. Couples the redox reaction to proton translocation (for every two electrons transferred, four hydrogen ions are translocated across the cytoplasmic membrane), and thus conserves the redox energy in a proton gradient. The chain is NADH-quinone oxidoreductase subunit N 1 from Sorangium cellulosum (strain So ce56) (Polyangium cellulosum (strain So ce56)).